Consider the following 101-residue polypeptide: Small ribosomal subunit protein uS10 (101 aa).

The protein belongs to the universal ribosomal protein uS10 family. Part of the 30S ribosomal subunit.

In terms of biological role, involved in the binding of tRNA to the ribosomes. In Saccharopolyspora erythraea (strain ATCC 11635 / DSM 40517 / JCM 4748 / NBRC 13426 / NCIMB 8594 / NRRL 2338), this protein is Small ribosomal subunit protein uS10.